The sequence spans 510 residues: Probable lipid II flippase MurJ (510 aa).

Transmembrane regions (helical) follow at residues 13 to 33, 81 to 101, 130 to 150, 154 to 174, 182 to 202, 240 to 260, 266 to 286, 315 to 335, 357 to 377, 396 to 416, 443 to 463, and 481 to 501; these read DVVI…LFAN, GLVS…AALF, FPYL…NTIG, VMSF…LFLA, LALA…QIPF, INLL…ISWL, LLEF…LPTL, IFLL…PMLL, AFNA…GYYA, MGFN…ASAM, VFFV…WYYV, and LVWL…LLGV.

The protein belongs to the MurJ/MviN family.

Its subcellular location is the cell inner membrane. Its pathway is cell wall biogenesis; peptidoglycan biosynthesis. In terms of biological role, involved in peptidoglycan biosynthesis. Transports lipid-linked peptidoglycan precursors from the inner to the outer leaflet of the cytoplasmic membrane. The chain is Probable lipid II flippase MurJ from Haemophilus influenzae (strain ATCC 51907 / DSM 11121 / KW20 / Rd).